The following is a 248-amino-acid chain: ATP synthase subunit a, chloroplastic (248 aa).

The next 5 membrane-spanning stretches (helical) occupy residues 38–58 (QVLITSWVVIAVLLGSATIAV), 96–116 (VPFIGTMFLFILVSNWSGALL), 135–155 (INTTVALALLTSVAYFYAGLA), 200–220 (LVVAVLVSLVPLVVPIPVMFL), and 221–241 (GLFTSAIQALIFATLAAAYIG).

The protein belongs to the ATPase A chain family. In terms of assembly, F-type ATPases have 2 components, CF(1) - the catalytic core - and CF(0) - the membrane proton channel. CF(1) has five subunits: alpha(3), beta(3), gamma(1), delta(1), epsilon(1). CF(0) has four main subunits: a, b, b' and c.

The protein localises to the plastid. Its subcellular location is the chloroplast thylakoid membrane. Its function is as follows. Key component of the proton channel; it plays a direct role in the translocation of protons across the membrane. This is ATP synthase subunit a, chloroplastic from Cycas taitungensis (Prince sago).